Here is a 515-residue protein sequence, read N- to C-terminus: Nuclear hormone receptor family member nhr-62 (515 aa).

The nuclear receptor DNA-binding region spans 95 to 170; sequence NLVCVVCGDQ…AGMNPRAVQS (76 aa). 2 consecutive NR C4-type zinc fingers follow at residues 98-118 and 134-153; these read CVVC…CNGC and CRFE…CRAC. The tract at residues 169–195 is disordered; it reads QSERVEREQNGSPNQIEEDDYKDLSSP. One can recognise an NR LBD domain in the interval 225-509; the sequence is EMAKLSEQIV…YLCHEVQFIQ (285 aa). Residues 498 to 509 form an AF-2 region; it reads SEYLCHEVQFIQ.

This sequence belongs to the nuclear hormone receptor family. As to expression, widely expressed at a low level in many tissues including the pharynx, sensory neurons, intestine, spermatheca, hypodermis, and excretory cell.

The protein localises to the nucleus. Its function is as follows. Orphan nuclear hormone receptor. Required for metabolic and physiologic responses associated with dietary-restriction-induced longevity. Modulates triglyceride and lipid metabolism and autophagy, associated with dietary-restriction, probably acting via regulation of transcription of target genes. This Caenorhabditis elegans protein is Nuclear hormone receptor family member nhr-62 (nhr-62).